The primary structure comprises 166 residues: Probable DHNTP pyrophosphohydrolase (166 aa).

The Nudix hydrolase domain occupies D42–I166. The Nudix box signature appears at G73–G94. Positions 88 and 92 each coordinate Mg(2+).

This sequence belongs to the Nudix hydrolase family. In terms of assembly, monomer. It depends on Mg(2+) as a cofactor.

The protein operates within cofactor biosynthesis; tetrahydrofolate biosynthesis; 2-amino-4-hydroxy-6-hydroxymethyl-7,8-dihydropteridine diphosphate from 7,8-dihydroneopterin triphosphate: step 1/4. In terms of biological role, probably mediates the removal of pyrophosphate from dihydroneopterin triphosphate (DHNTP), a possible step in the pterin branch of the folate synthesis pathway. This Lactococcus lactis subsp. cremoris (strain MG1363) protein is Probable DHNTP pyrophosphohydrolase (folQ).